We begin with the raw amino-acid sequence, 466 residues long: Phytase A (466 aa).

The N-terminal stretch at 1–19 (MAVLSVLLPITFLLSSVTG) is a signal peptide. Cys30 and Cys39 are disulfide-bonded. 1D-myo-inositol hexakisphosphate-binding residues include Gln49, Tyr50, Arg80, His81, Arg84, and Thr87. Cystine bridges form between Cys70/Cys413, Cys214/Cys464, Cys263/Cys281, and Cys435/Cys443. Residue His81 is the Nucleophile of the active site. 2 N-linked (GlcNAc...) asparagine glycosylation sites follow: Asn104 and Asn119. Residue Arg164 coordinates 1D-myo-inositol hexakisphosphate. Asn206 and Asn219 each carry an N-linked (GlcNAc...) asparagine glycan. Lys300 is a binding site for 1D-myo-inositol hexakisphosphate. N-linked (GlcNAc...) asparagine glycans are attached at residues Asn338 and Asn351. 1D-myo-inositol hexakisphosphate contacts are provided by His360 and Asp361. N-linked (GlcNAc...) asparagine glycosylation is present at Asn375.

Belongs to the histidine acid phosphatase family. As to quaternary structure, monomer.

The protein resides in the secreted. It carries out the reaction 1D-myo-inositol hexakisphosphate + H2O = 1D-myo-inositol 1,2,4,5,6-pentakisphosphate + phosphate. The catalysed reaction is 1D-myo-inositol 1,2,4,5,6-pentakisphosphate + H2O = 1D-myo-inositol 1,2,5,6-tetrakisphosphate + phosphate. It catalyses the reaction 1D-myo-inositol 1,2,5,6-tetrakisphosphate + H2O = 1D-myo-inositol 1,2,6-trisphosphate + phosphate. The enzyme catalyses 1D-myo-inositol 1,2,6-trisphosphate + H2O = 1D-myo-inositol 1,2-bisphosphate + phosphate. It carries out the reaction 1D-myo-inositol 1,2-bisphosphate + H2O = 1D-myo-inositol 2-phosphate + phosphate. Its function is as follows. Catalyzes the phosphate monoester hydrolysis of phytic acid (myo-inositol hexakisphosphate), which results in the stepwise formation of myo-inositol pentakis-, tetrakis-, tris-, bis-, and monophosphates, as well as the liberation of inorganic phosphate. Myo-inositol 2-monophosphate is the end product. The chain is Phytase A (phyA) from Aspergillus oryzae (strain ATCC 42149 / RIB 40) (Yellow koji mold).